The sequence spans 204 residues: Methylthioribulose-1-phosphate dehydratase (204 aa).

Positions 95 and 97 each coordinate Zn(2+).

The protein belongs to the aldolase class II family. MtnB subfamily. It depends on Zn(2+) as a cofactor.

The catalysed reaction is 5-(methylsulfanyl)-D-ribulose 1-phosphate = 5-methylsulfanyl-2,3-dioxopentyl phosphate + H2O. It participates in amino-acid biosynthesis; L-methionine biosynthesis via salvage pathway; L-methionine from S-methyl-5-thio-alpha-D-ribose 1-phosphate: step 2/6. Catalyzes the dehydration of methylthioribulose-1-phosphate (MTRu-1-P) into 2,3-diketo-5-methylthiopentyl-1-phosphate (DK-MTP-1-P). The sequence is that of Methylthioribulose-1-phosphate dehydratase from Parvibaculum lavamentivorans (strain DS-1 / DSM 13023 / NCIMB 13966).